The chain runs to 997 residues: Serine-repeat antigen protein 5 (997 aa).

The N-terminal stretch at 1-22 (MKSYISLFFILCVIFNKNVIKC) is a signal peptide. 2 disordered regions span residues 26–107 (SQTG…EKQD) and 181–252 (LPSN…PRNL). A compositionally biased stretch (gly residues) spans 30–51 (NTGGGQAGNTGGDQAGSTGGSP). The segment covering 52-67 (QGSTGASPQGSTGASP) has biased composition (low complexity). The span at 68–84 (QGSTGASQPGSSEPSNP) shows a compositional bias: polar residues. 3 stretches are compositionally biased toward low complexity: residues 85–103 (VSSG…STSS), 183–196 (SNGT…STGT), and 205–235 (SDSS…SSES). Position 183 is a phosphoserine (Ser-183). N-linked (GlcNAc...) asparagine glycosylation occurs at Asn-184. Residues 216–253 (SSSSSSSSSSSSSSSSSSESLPANGPDSPTVKPPRNLQ) form an interaction with PTKL region. N-linked (GlcNAc...) asparagine glycosylation is present at Asn-318. The segment at 373 to 390 (YKYLSEDIVSKFKEIKAE) is interaction with host VTN. Cys-445 and Cys-497 are disulfide-bonded. Position 549 is a phosphothreonine; by CPK1 (Thr-549). 5 disulfide bridges follow: Cys-567/Cys-572, Cys-581/Cys-610, Cys-593/Cys-636, Cys-627/Cys-672, and Cys-755/Cys-809. Residues 579-997 (NNCISNLQVE…TNNECYFCYV (419 aa)) are thiol-protease-like. Residues His-762 and Asn-787 contribute to the active site. N-linked (GlcNAc...) asparagine glycosylation occurs at Asn-828. Residues 843 to 886 (KASPEFYHNLYFKNFNVGKKNLFSEKEDNENNKKLGNNYIIFGQ) constitute a propeptide, inhibition peptide. Ser-866 bears the Phosphoserine mark.

It belongs to the peptidase C1 family. As to quaternary structure, may interact (via C-terminus) with PTKL (via SAM domain). In terms of assembly, interacts (via C-terminus) with human VTN (via hemopexin repeat 2); may form heterotetramers of two VTN and SERA5 P47 heterodimers; the interaction may protect merozoites from phagocytosis by host monocytes; VTN glycosylation appears to be dispensable for the interaction. Monomer. Interacts with kinase CPK1/CDPK1 at the schizont stage. Post-translationally, phosphorylation by CPK1/CDPK1 increases SERA5 protease activity towards a synthetic peptide in vitro. Just prior to merozoite egress from host erythrocytes, proteolytically cleaved into multiple fragments. Cleaved by SUB1 into p47 and p73, p73 is further cleaved by SUB1 into p56 and p18 and p56 is further processed into p50 by an unidentified protease. p47 remains covalently associated with p18 via disulfide bond. p47 can be processed into p25n and p25c by SUB1. p25c and p25n remain associated with p18. Proteolytic processing is essential for merozoite egress from host erythrocytes. The cleavage of the propeptide to produce p50 is necessary for protease activity and to promote merozoite egress.

Its subcellular location is the parasitophorous vacuole. The protein localises to the secreted. It is found in the cell membrane. Its function is as follows. Plays an essential role during the asexual blood stage development by controlling the kinetics of merozoite egress from host erythrocytes. Specifically, prevents premature rupture of the parasitophorous vacuole and host erythrocyte membranes. Functionally, may prevent merozoite phagocytosis by host monocytes via interaction with host VTN at the merozoite surface. Plays a role in parasite growth. Protease activity is controversial. Has been shown in a number of studies to have protease activity towards a synthetic peptide in vitro. Has also been shown to lack protease activity towards a synthetic peptide in vitro. In Plasmodium falciparum (isolate 3D7), this protein is Serine-repeat antigen protein 5.